A 265-amino-acid chain; its full sequence is Esterase claE (265 aa).

Catalysis depends on charge relay system residues serine 121, aspartate 211, and histidine 239.

Belongs to the LovG family.

Its pathway is secondary metabolite biosynthesis. In terms of biological role, esterase; part of the cla gene cluster that produces clavatol and ortho-quinone methide. The clavatol biosynthesis cluster cla and the terrestric acid cluster tra are both involved in the production of peniphenones and penilactones. The non-reducing PKS claF is responsible for the formation of clavatol from successive condensations of 3 malonyl-CoA units, presumably with a simple acetyl-CoA starter unit, and 2 methylation steps. The esterase claE probably collaborates with claF by catalyzing the hydrolysis of ACP-bound acyl intermediates to free the ACP from stalled intermediates. The clavatol oxidase claD then converts clavatol to hydroxyclavatol. Spontaneous dehydration of hydroxyclavatol leads to the accumulation of the highly active ortho-quinone methide. On the other hand, the PKS-NRPS hybrid traA is involved in the formation of crustosic acid, with the help of traB and traD. The polyketide synthase module (PKS) of traA is responsible for the synthesis of the polyketide backbone via the condensation of an acetyl-CoA starter unit with 3 malonyl-CoA units. The downstream nonribosomal peptide synthetase (NRPS) module then amidates the carboxyl end of the polyketide with L-malic acid. Because traA lacks a designated enoylreductase (ER) domain, the required activity is provided the enoyl reductase traG. Crustosic acid undergoes decarboxylation and isomerization to the terrestric acid, catalyzed by the 2-oxoglutarate-dependent dioxygenase traH. Both acids are further converted to the 2 gamma-butyrolactones (R)-5-methyltetronic acid and (S)-5-carboxylmethyltetronic acid, with involvement of the cytochrome P450 monooxygenase claJ. Spontaneous addition of the methide to these gamma-butyrolactones leads to peniphenone D and penilactone D, which undergo again stereospecific attacking by methide to give penilactones A and B. This Penicillium crustosum (Blue mold fungus) protein is Esterase claE.